A 78-amino-acid chain; its full sequence is Acyl carrier protein (78 aa).

In terms of domain architecture, Carrier spans 2 to 77 (STIEERVKKI…AAIDYVKAHQ (76 aa)). O-(pantetheine 4'-phosphoryl)serine is present on S37.

The protein belongs to the acyl carrier protein (ACP) family. Post-translationally, 4'-phosphopantetheine is transferred from CoA to a specific serine of apo-ACP by AcpS. This modification is essential for activity because fatty acids are bound in thioester linkage to the sulfhydryl of the prosthetic group.

The protein localises to the cytoplasm. It participates in lipid metabolism; fatty acid biosynthesis. Functionally, carrier of the growing fatty acid chain in fatty acid biosynthesis. In Pseudomonas putida (strain ATCC 47054 / DSM 6125 / CFBP 8728 / NCIMB 11950 / KT2440), this protein is Acyl carrier protein.